The chain runs to 816 residues: H(+)/Cl(-) exchange transporter 5 (816 aa).

Topologically, residues 1-124 (MAMWQGAMDN…WALIHSVSDA (124 aa)) are cytoplasmic. Transmembrane regions (helical) follow at residues 125–162 (FSGW…ICTG) and 208–231 (VNYF…VKVF). A Selectivity filter part_1 motif is present at residues 237 to 241 (GSGIP). Ser238 contributes to the chloride binding site. The segment at residues 240-247 (IPEIKTIL) is an intramembrane region (helical). 2 helical membrane passes run 256–275 (LGKW…VSSG) and 281–300 (EGPL…HCFN). A Selectivity filter part_2 motif is present at residues 279–283 (GKEGP). 2 intramembrane regions (helical) span residues 312–324 (VLSA…VSVA) and 328–336 (PIGGVLFSL). 5 helical membrane-spanning segments follow: residues 348 to 366 (LWRS…RSIN), 389 to 414 (LVPF…IAWC), 422 to 442 (LGKY…ILAF), 498 to 518 (MWQL…TFGM), and 523 to 542 (GLFI…LGVG). Positions 523-527 (GLFIP) match the Selectivity filter part_3 motif. Phe525 serves as a coordination point for chloride. Residues 570–584 (GLYAMVGAAACLGGV) constitute an intramembrane region (helical). An intramembrane region (note=Loop between two helices) is located at residues 585–587 (TRM). An intramembrane region (helical) is located at residues 588-599 (TVSLVVIMFELT). The note=Loop between two helices intramembrane region spans 600–604 (GGLEY). The helical transmembrane segment at 605-622 (IVPLMAAAMTSKWVADAL) threads the bilayer. The Cytoplasmic portion of the chain corresponds to 623-816 (GREGIYDAHI…NQDPDSILFN (194 aa)). Tyr628 is a chloride binding site. CBS domains follow at residues 656–720 (MKPR…ARKK) and 752–812 (ILDL…DPDS). Residues Thr666, 687–689 (YSG), and 794–797 (TKKD) contribute to the ATP site.

It belongs to the chloride channel (TC 2.A.49) family. ClC-5/CLCN5 subfamily. In terms of assembly, interacts with NEDD4 and NEDD4L. Ubiquitinated by NEDD4L in the presence of albumin; which promotes endocytosis and proteasomal degradation.

The protein resides in the golgi apparatus membrane. The protein localises to the endosome membrane. Its subcellular location is the cell membrane. The enzyme catalyses 2 chloride(in) + H(+)(out) = 2 chloride(out) + H(+)(in). Proton-coupled chloride transporter. Functions as antiport system and exchanges chloride ions against protons. Important for normal acidification of the endosome lumen. May play an important role in renal tubular function. The CLC channel family contains both chloride channels and proton-coupled anion transporters that exchange chloride or another anion for protons. The absence of conserved gating glutamate residues is typical for family members that function as channels. The polypeptide is H(+)/Cl(-) exchange transporter 5 (CLCN5) (Pongo abelii (Sumatran orangutan)).